A 409-amino-acid chain; its full sequence is MSNAPKIKVSGPVVELDGDEMTRVIWKLIKDMLILPYLDIRLDYYDLGIEHRDATDDQVTIDAAYAIKKHGVGVKCATITPDEARVEEFNLKKMWLSPNGTIRNILGGTIFREPIVISNVPRLVPGWTKPIVIGRHAFGDQYRATNFKVDQPGTVTLTFTPADGSAPIVHEMVSIPEDGGVVLGMYNFKESIRDFARASFSYGLNAKWPVYLSTKNTILKAYDGMFKDEFERVYEEEFKAQFEAAGLTYEHRLIDDMVAACLKWEGGYVWACKNYDGDVQSDTVAQGYGSLGLMTSVLMTADGKTVEAEAAHGTVTRHYRQYQAGKPTSTNPIASIFAWTRGLQHRGKLDGTPEVIDFAHKLESVVIATVESGKMTKDLAILIGPEQDWLNSEEFLDAIADNLEKELAN.

NADP(+) is bound by residues Lys75, Thr78, Thr80, and Arg85. Asp255, Asp278, and Asp282 together coordinate Mn(2+). NADP(+)-binding residues include Gly313, Thr314, Val315, His318, and Asn331.

Belongs to the isocitrate and isopropylmalate dehydrogenases family. Homodimer. Mg(2+) is required as a cofactor. Mn(2+) serves as cofactor.

The enzyme catalyses D-threo-isocitrate + NADP(+) = 2-oxoglutarate + CO2 + NADPH. In terms of biological role, catalyzes the oxidative decarboxylation of isocitrate to 2-oxoglutarate and carbon dioxide with the concomitant reduction of NADP(+). The protein is Isocitrate dehydrogenase [NADP] 1 (icd) of Mycobacterium bovis (strain ATCC BAA-935 / AF2122/97).